A 446-amino-acid chain; its full sequence is uncharacterized protein (446 aa).

Disordered stretches follow at residues 63 to 95 (KNKPHDLKNPKRSVSFKYKPNNSRSDLEESDLR) and 155 to 232 (AESS…HPVK). Residues 156–169 (ESSVPTPKLTNESN) show a composition bias toward polar residues. Composition is skewed to basic and acidic residues over residues 182–199 (DQHESRTKKSMHSTDHSA) and 213–227 (ITKESELTRNDEARK).

This is an uncharacterized protein from Mus musculus (Mouse).